A 515-amino-acid chain; its full sequence is Cytochrome P450 monooxygenase mfmA (515 aa).

The helical transmembrane segment at 3–23 (KISIIPIVGVALSLAIILQLG) threads the bilayer. Cys-453 is a binding site for heme.

The protein belongs to the cytochrome P450 family. Requires heme as cofactor.

The protein localises to the membrane. It participates in secondary metabolite biosynthesis; terpenoid biosynthesis. In terms of biological role, cytochrome P450 monooxygenase; part of the gene cluster that mediates the biosynthesis of the phthalide-terpenoid hybrid 11'-O-desmethylfendlerol. Within the pathway, mfma and mfmC act together to convert 3,5-dimethylorsellinic acid (DMOA) into the phthalide 5,7-dihydroxy-4-(hydroxymethyl)-6-methylphthalide. MfmA performs especially an hydroxylation at C-9. The biosynthesis of 11'-O-desmethylfendlerol begins with the NR-PKS mfmB that forms 3,5-dimethylorsellinic acid (DMOA), which is then transformed into the phthalide 5,7-dihydroxy-4-(hydroxymethyl)-6-methylphthalide by the cytochrome P450 monooxygenase mfmA and the hydrolase mfmC. Subsequently, the methyltransferase mfmE catalyzes 7-O-methylation to yield 5-hydroxy-4-(hydroxymethyl)-7-methoxy-6-methylphthalide, which undergoes C-3 hydroxylation by the cytochrome P450 monooxygenase mfmF. The resultant cyclopolic acid (2,5-dihydroxy-4-(hydroxymethyl)-7-methoxy-6-methylphthalide) is then farnesylated by the DMATS-type prenyltransferase mfmD to afford 5-O-farnesylcyclopolic acid. Finally, the Pyr4-family terpene cyclase mfmH cyclizes the farnesyl moiety of 5-O-farnesylcyclopolic acid into a drimane-like structure, thus completing the biosynthesis of 11'-O-desmethylfendlerol. The polypeptide is Cytochrome P450 monooxygenase mfmA (Annulohypoxylon moriforme (Filamentous fungus)).